The primary structure comprises 30 residues: Ribosome-inactivating protein momorcochin-S (30 aa).

Belongs to the ribosome-inactivating protein family. Type 1 RIP subfamily. Post-translationally, glycosylated.

The catalysed reaction is Endohydrolysis of the N-glycosidic bond at one specific adenosine on the 28S rRNA.. Functionally, inactivates eukaryotic 60S ribosomal subunits. The protein is Ribosome-inactivating protein momorcochin-S of Momordica cochinchinensis (Spiny bitter cucumber).